The chain runs to 332 residues: Biotin synthase (332 aa).

One can recognise a Radical SAM core domain in the interval Tyr47–Ala273. Residues Cys65, Cys69, and Cys72 each contribute to the [4Fe-4S] cluster site. Positions 109, 141, 201, and 271 each coordinate [2Fe-2S] cluster.

It belongs to the radical SAM superfamily. Biotin synthase family. As to quaternary structure, homodimer. [4Fe-4S] cluster is required as a cofactor. [2Fe-2S] cluster serves as cofactor.

The enzyme catalyses (4R,5S)-dethiobiotin + (sulfur carrier)-SH + 2 reduced [2Fe-2S]-[ferredoxin] + 2 S-adenosyl-L-methionine = (sulfur carrier)-H + biotin + 2 5'-deoxyadenosine + 2 L-methionine + 2 oxidized [2Fe-2S]-[ferredoxin]. The protein operates within cofactor biosynthesis; biotin biosynthesis; biotin from 7,8-diaminononanoate: step 2/2. Its function is as follows. Catalyzes the conversion of dethiobiotin (DTB) to biotin by the insertion of a sulfur atom into dethiobiotin via a radical-based mechanism. The chain is Biotin synthase from Geobacillus thermodenitrificans (strain NG80-2).